Consider the following 319-residue polypeptide: 4-diphosphocytidyl-2-C-methyl-D-erythritol kinase (319 aa).

Residue Lys21 is part of the active site. 106-116 serves as a coordination point for ATP; it reads PIGAGLAGGSS. Residue Asp148 is part of the active site.

The protein belongs to the GHMP kinase family. IspE subfamily.

It catalyses the reaction 4-CDP-2-C-methyl-D-erythritol + ATP = 4-CDP-2-C-methyl-D-erythritol 2-phosphate + ADP + H(+). The protein operates within isoprenoid biosynthesis; isopentenyl diphosphate biosynthesis via DXP pathway; isopentenyl diphosphate from 1-deoxy-D-xylulose 5-phosphate: step 3/6. Its function is as follows. Catalyzes the phosphorylation of the position 2 hydroxy group of 4-diphosphocytidyl-2C-methyl-D-erythritol. The chain is 4-diphosphocytidyl-2-C-methyl-D-erythritol kinase from Prochlorococcus marinus (strain MIT 9303).